The primary structure comprises 126 residues: FCS-Like Zinc finger 7 (126 aa).

The segment at 72-116 adopts an FLZ-type zinc-finger fold; the sequence is SFLVNCGFCKRGLAPGRDIYMYKGDAAFCSIECREQQMEHDEGKT.

The protein belongs to the FLZ family. Interacts with KIN10 and KIN11 via its FLZ-type zinc finger domain. Interacts with KINB3 via its N-terminal part. Forms homodimer and heterodimer with FLZ1, FLZ2 and FLZ15 in vitro.

Its subcellular location is the cytoplasm. The protein localises to the nucleus. May act as an adapter to facilitate the interaction of SnRK1 complex with effector proteins, conferring tissue- and stimulus-type specific differences in the SnRK1 regulation pathway. The sequence is that of FCS-Like Zinc finger 7 from Arabidopsis thaliana (Mouse-ear cress).